A 751-amino-acid polypeptide reads, in one-letter code: Semaphorin-3C (751 aa).

An N-terminal signal peptide occupies residues M1–G21. One can recognise a Sema domain in the interval R28 to L511. The N-linked (GlcNAc...) asparagine glycan is linked to N81. A disulfide bridge links C101 with C112. An N-linked (GlcNAc...) asparagine glycan is attached at N123. 3 cysteine pairs are disulfide-bonded: C130–C139, C266–C378, and C290–C338. A glycan (N-linked (GlcNAc...) asparagine) is linked at N268. N-linked (GlcNAc...) asparagine glycosylation is present at N465. The cysteines at positions 514 and 532 are disulfide-linked. The 85-residue stretch at A571 to A655 folds into the Ig-like C2-type domain. 2 N-linked (GlcNAc...) asparagine glycosylation sites follow: N585 and N586. A disulfide bond links C592 and C643. The span at T712–K731 shows a compositional bias: basic and acidic residues. The disordered stretch occupies residues T712–S751.

Belongs to the semaphorin family. In terms of assembly, interacts with PLXND1.

The protein localises to the secreted. Binds to plexin family members and plays an important role in the regulation of developmental processes. Required for normal cardiovascular development during embryogenesis. Functions as attractant for growing axons, and thereby plays an important role in axon growth and axon guidance. This Bos taurus (Bovine) protein is Semaphorin-3C (SEMA3C).